The primary structure comprises 323 residues: Cyclin-H (323 aa).

Serine 5 is modified (phosphoserine; by CDK8). Serine 132 carries the post-translational modification Phosphoserine. Positions 296-323 are disordered; it reads GYEDDDYVSKKPKQEEEEWTDDDLVDAL. Serine 304 is subject to Phosphoserine; by CDK8. The segment covering 310–323 has biased composition (acidic residues); sequence EEEEWTDDDLVDAL. Threonine 315 is modified (phosphothreonine).

Belongs to the cyclin family. Cyclin C subfamily. As to quaternary structure, associates primarily with CDK7 and MAT1 to form the CAK complex. CAK can further associate with the core-TFIIH to form the TFIIH basal transcription factor.

Its subcellular location is the nucleus. Regulates CDK7, the catalytic subunit of the CDK-activating kinase (CAK) enzymatic complex. CAK activates the cyclin-associated kinases CDK1, CDK2, CDK4 and CDK6 by threonine phosphorylation. CAK complexed to the core-TFIIH basal transcription factor activates RNA polymerase II by serine phosphorylation of the repetitive C-terminal domain (CTD) of its large subunit (POLR2A), allowing its escape from the promoter and elongation of the transcripts. Involved in cell cycle control and in RNA transcription by RNA polymerase II. Its expression and activity are constant throughout the cell cycle. In Rattus norvegicus (Rat), this protein is Cyclin-H (Ccnh).